We begin with the raw amino-acid sequence, 217 residues long: Large ribosomal subunit protein uL3 (217 aa).

Residues 129–161 (SRGPMSHGSKNHRAPGSTGAGTTPGRIYPGKRM) form a disordered region. The segment covering 142–153 (APGSTGAGTTPG) has biased composition (low complexity).

Belongs to the universal ribosomal protein uL3 family. In terms of assembly, part of the 50S ribosomal subunit. Forms a cluster with proteins L14 and L19.

In terms of biological role, one of the primary rRNA binding proteins, it binds directly near the 3'-end of the 23S rRNA, where it nucleates assembly of the 50S subunit. This Prochlorococcus marinus subsp. pastoris (strain CCMP1986 / NIES-2087 / MED4) protein is Large ribosomal subunit protein uL3.